Consider the following 450-residue polypeptide: Phosphoglucosamine mutase (450 aa).

The active-site Phosphoserine intermediate is S103. The Mg(2+) site is built by S103, D243, D245, and D247. S103 bears the Phosphoserine mark.

This sequence belongs to the phosphohexose mutase family. The cofactor is Mg(2+). Post-translationally, activated by phosphorylation.

It carries out the reaction alpha-D-glucosamine 1-phosphate = D-glucosamine 6-phosphate. Catalyzes the conversion of glucosamine-6-phosphate to glucosamine-1-phosphate. The chain is Phosphoglucosamine mutase from Lactobacillus delbrueckii subsp. bulgaricus (strain ATCC 11842 / DSM 20081 / BCRC 10696 / JCM 1002 / NBRC 13953 / NCIMB 11778 / NCTC 12712 / WDCM 00102 / Lb 14).